The chain runs to 258 residues: Small ribosomal subunit protein mS35 (258 aa).

The transit peptide at 1–39 (MAFNPLLSLLKADAIFLGQLSKSSFCATSRAFSVFYFTR) directs the protein to the mitochondrion.

Belongs to the mitochondrion-specific ribosomal protein mS35 family. As to quaternary structure, component of the mitochondrial small ribosomal subunit (mt-SSU). Mature yeast 74S mitochondrial ribosomes consist of a small (37S) and a large (54S) subunit. The 37S small subunit contains a 15S ribosomal RNA (15S mt-rRNA) and at least 32 different proteins. The 54S large subunit contains a 21S rRNA (21S mt-rRNA) and at least 45 different proteins.

It localises to the mitochondrion. In terms of biological role, component of the mitochondrial ribosome (mitoribosome), a dedicated translation machinery responsible for the synthesis of mitochondrial genome-encoded proteins, including at least some of the essential transmembrane subunits of the mitochondrial respiratory chain. The mitoribosomes are attached to the mitochondrial inner membrane and translation products are cotranslationally integrated into the membrane. In Schizosaccharomyces pombe (strain 972 / ATCC 24843) (Fission yeast), this protein is Small ribosomal subunit protein mS35 (rsm24).